A 467-amino-acid polypeptide reads, in one-letter code: Probable serine hydroxymethyltransferase, cytosolic (467 aa).

Position 243 is an N6-(pyridoxal phosphate)lysine (Lys243).

This sequence belongs to the SHMT family. As to quaternary structure, homotetramer. Requires pyridoxal 5'-phosphate as cofactor.

Its subcellular location is the cytoplasm. It catalyses the reaction (6R)-5,10-methylene-5,6,7,8-tetrahydrofolate + glycine + H2O = (6S)-5,6,7,8-tetrahydrofolate + L-serine. It functions in the pathway one-carbon metabolism; tetrahydrofolate interconversion. In terms of biological role, interconversion of serine and glycine. The polypeptide is Probable serine hydroxymethyltransferase, cytosolic (Schizosaccharomyces pombe (strain 972 / ATCC 24843) (Fission yeast)).